We begin with the raw amino-acid sequence, 432 residues long: Septin-14 (432 aa).

In terms of domain architecture, Septin-type G spans Gln-49 to Lys-315. The interval Gly-59 to Ser-66 is G1 motif. GTP-binding positions include Gly-59–Ser-66, Gly-114, Lys-195–Asp-203, Gly-249, and Arg-264. The G3 motif stretch occupies residues Glu-111 to Gly-114. The G4 motif stretch occupies residues Ala-194–Asp-197. Residues Glu-332 to Ala-412 are a coiled coil. A required for interaction with SEPTIN4. Required for migration of cortical neurons during corticogenesis region spans residues Glu-369–Lys-432.

This sequence belongs to the TRAFAC class TrmE-Era-EngA-EngB-Septin-like GTPase superfamily. Septin GTPase family. In terms of assembly, septins polymerize into heterooligomeric protein complexes that form filaments, and can associate with cellular membranes, actin filaments and microtubules. GTPase activity is required for filament formation. Interacts with ACTN4. Interacts with SEPTIN9. Interacts (via C-terminus) with SEPTIN4. In terms of tissue distribution, testis-specific (at protein level).

It is found in the cytoplasm. It localises to the cytoskeleton. Its subcellular location is the cell projection. The protein localises to the axon. The protein resides in the dendrite. It is found in the perikaryon. It localises to the perinuclear region. Its subcellular location is the cytoplasmic vesicle. The protein localises to the secretory vesicle. The protein resides in the acrosome. Its function is as follows. Filament-forming cytoskeletal GTPase. Involved in the migration of cortical neurons and the formation of neuron leading processes during embryonic development. Plays a role in sperm head formation during spermiogenesis, potentially via facilitating localization of ACTN4 to cell filaments. In Homo sapiens (Human), this protein is Septin-14.